The primary structure comprises 300 residues: Cell shape-determining protein MreC (300 aa).

Over 1–17 (MARDRTRPEDFTRPLRR) the chain is Cytoplasmic. A helical membrane pass occupies residues 18–38 (ILVGGLVLLLLGIFLIWRIDS). Residues 39–300 (PRVEQFRAAL…APAAVEGADG (262 aa)) lie on the Periplasmic side of the membrane. A coiled-coil region spans residues 74–117 (QSYTRIYEQNQELRRELQQMKAWKEAALQLEQKNARLLDLNQVR). The disordered stretch occupies residues 277 to 300 (SDPGKLVAEPPAPPAPAAVEGADG).

It belongs to the MreC family.

Its subcellular location is the cell inner membrane. Functionally, involved in formation and maintenance of cell shape. The protein is Cell shape-determining protein MreC of Cereibacter sphaeroides (Rhodobacter sphaeroides).